The primary structure comprises 949 residues: Probable transcriptional regulatory protein STB4 (949 aa).

A DNA-binding region (zn(2)-C6 fungal-type) is located at residues Cys87–Cys113. 2 stretches are compositionally biased toward low complexity: residues Asp164 to Ser178 and Ser200 to Ser212. Disordered stretches follow at residues Asp164 to Pro214 and Gly862 to Ser888. Basic and acidic residues predominate over residues Gly862 to Asn874.

Its subcellular location is the nucleus. Binds to SIN3. This is Probable transcriptional regulatory protein STB4 (STB4) from Saccharomyces cerevisiae (strain ATCC 204508 / S288c) (Baker's yeast).